A 267-amino-acid chain; its full sequence is 4-hydroxy-tetrahydrodipicolinate reductase (267 aa).

NAD(+)-binding positions include 8–13 and D34; that span reads GAAGRM. NADP(+) is bound at residue R35. Residues 98–100 and 122–125 contribute to the NAD(+) site; these read GTT and AANF. Residue H155 is the Proton donor/acceptor of the active site. Position 156 (H156) interacts with (S)-2,3,4,5-tetrahydrodipicolinate. The active-site Proton donor is the K159. Position 165–166 (165–166) interacts with (S)-2,3,4,5-tetrahydrodipicolinate; it reads GT.

The protein belongs to the DapB family.

It localises to the cytoplasm. The catalysed reaction is (S)-2,3,4,5-tetrahydrodipicolinate + NAD(+) + H2O = (2S,4S)-4-hydroxy-2,3,4,5-tetrahydrodipicolinate + NADH + H(+). The enzyme catalyses (S)-2,3,4,5-tetrahydrodipicolinate + NADP(+) + H2O = (2S,4S)-4-hydroxy-2,3,4,5-tetrahydrodipicolinate + NADPH + H(+). It functions in the pathway amino-acid biosynthesis; L-lysine biosynthesis via DAP pathway; (S)-tetrahydrodipicolinate from L-aspartate: step 4/4. Its function is as follows. Catalyzes the conversion of 4-hydroxy-tetrahydrodipicolinate (HTPA) to tetrahydrodipicolinate. The chain is 4-hydroxy-tetrahydrodipicolinate reductase from Ectopseudomonas mendocina (strain ymp) (Pseudomonas mendocina).